The primary structure comprises 350 residues: Holliday junction branch migration complex subunit RuvB (350 aa).

The segment at 1–186 is large ATPase domain (RuvB-L); sequence MAGHEEEDER…FGIPLRLDFY (186 aa). Residues L25, R26, G67, K70, T71, T72, 133–135, R176, Y186, and R223 contribute to the ATP site; that span reads EDF. T71 serves as a coordination point for Mg(2+). The interval 187–257 is small ATPAse domain (RuvB-S); sequence ETDELVQIVT…IADAALNRLE (71 aa). The head domain (RuvB-H) stretch occupies residues 260–350; the sequence is GRGLDAMDRR…VQPDLWSDAP (91 aa). 3 residues coordinate DNA: R296, R315, and R320.

The protein belongs to the RuvB family. In terms of assembly, homohexamer. Forms an RuvA(8)-RuvB(12)-Holliday junction (HJ) complex. HJ DNA is sandwiched between 2 RuvA tetramers; dsDNA enters through RuvA and exits via RuvB. An RuvB hexamer assembles on each DNA strand where it exits the tetramer. Each RuvB hexamer is contacted by two RuvA subunits (via domain III) on 2 adjacent RuvB subunits; this complex drives branch migration. In the full resolvosome a probable DNA-RuvA(4)-RuvB(12)-RuvC(2) complex forms which resolves the HJ.

The protein localises to the cytoplasm. It carries out the reaction ATP + H2O = ADP + phosphate + H(+). The RuvA-RuvB-RuvC complex processes Holliday junction (HJ) DNA during genetic recombination and DNA repair, while the RuvA-RuvB complex plays an important role in the rescue of blocked DNA replication forks via replication fork reversal (RFR). RuvA specifically binds to HJ cruciform DNA, conferring on it an open structure. The RuvB hexamer acts as an ATP-dependent pump, pulling dsDNA into and through the RuvAB complex. RuvB forms 2 homohexamers on either side of HJ DNA bound by 1 or 2 RuvA tetramers; 4 subunits per hexamer contact DNA at a time. Coordinated motions by a converter formed by DNA-disengaged RuvB subunits stimulates ATP hydrolysis and nucleotide exchange. Immobilization of the converter enables RuvB to convert the ATP-contained energy into a lever motion, pulling 2 nucleotides of DNA out of the RuvA tetramer per ATP hydrolyzed, thus driving DNA branch migration. The RuvB motors rotate together with the DNA substrate, which together with the progressing nucleotide cycle form the mechanistic basis for DNA recombination by continuous HJ branch migration. Branch migration allows RuvC to scan DNA until it finds its consensus sequence, where it cleaves and resolves cruciform DNA. This is Holliday junction branch migration complex subunit RuvB from Rhodospirillum rubrum (strain ATCC 11170 / ATH 1.1.1 / DSM 467 / LMG 4362 / NCIMB 8255 / S1).